A 199-amino-acid chain; its full sequence is Tropomyosin-1 (199 aa).

Residues 1–199 (MDKIREKLSN…DEIAASLENL (199 aa)) adopt a coiled-coil conformation. Glycyl lysine isopeptide (Lys-Gly) (interchain with G-Cter in ubiquitin) cross-links involve residues Lys39 and Lys59. Disordered stretches follow at residues 59–81 (KLEAGLSDSKQTEQDNVEKENQI) and 102–147 (LAES…TEKL). Composition is skewed to basic and acidic residues over residues 68-80 (KQTEQDNVEKENQ) and 102-114 (LAESKQLSEDSHH). Residues 115 to 126 (LQSNNDNFSKKN) are compositionally biased toward polar residues. Positions 136 to 147 (SDTKLKETTEKL) are enriched in basic and acidic residues. A Glycyl lysine isopeptide (Lys-Gly) (interchain with G-Cter in ubiquitin) cross-link involves residue Lys187. A Phosphoserine modification is found at Ser195.

As to quaternary structure, homodimer.

Its subcellular location is the cytoplasm. It localises to the cytoskeleton. The chain is Tropomyosin-1 (TPM1) from Saccharomyces cerevisiae (strain ATCC 204508 / S288c) (Baker's yeast).